Here is a 96-residue protein sequence, read N- to C-terminus: Co-chaperonin GroES (96 aa).

It belongs to the GroES chaperonin family. Heptamer of 7 subunits arranged in a ring. Interacts with the chaperonin GroEL.

It is found in the cytoplasm. Together with the chaperonin GroEL, plays an essential role in assisting protein folding. The GroEL-GroES system forms a nano-cage that allows encapsulation of the non-native substrate proteins and provides a physical environment optimized to promote and accelerate protein folding. GroES binds to the apical surface of the GroEL ring, thereby capping the opening of the GroEL channel. The polypeptide is Co-chaperonin GroES (Legionella jeonii).